The sequence spans 72 residues: DNA gyrase inhibitor YacG (72 aa).

Zn(2+)-binding residues include cysteine 17, cysteine 20, cysteine 32, and cysteine 36. The tract at residues 51 to 72 (IPGPEEEEMSYPPRSDDENRSR) is disordered.

The protein belongs to the DNA gyrase inhibitor YacG family. In terms of assembly, interacts with GyrB. It depends on Zn(2+) as a cofactor.

Its function is as follows. Inhibits all the catalytic activities of DNA gyrase by preventing its interaction with DNA. Acts by binding directly to the C-terminal domain of GyrB, which probably disrupts DNA binding by the gyrase. The chain is DNA gyrase inhibitor YacG from Methylorubrum extorquens (strain PA1) (Methylobacterium extorquens).